The sequence spans 126 residues: Holo-[acyl-carrier-protein] synthase (126 aa).

Residues Asp-9 and Glu-58 each contribute to the Mg(2+) site.

Belongs to the P-Pant transferase superfamily. AcpS family. Requires Mg(2+) as cofactor.

It localises to the cytoplasm. It catalyses the reaction apo-[ACP] + CoA = holo-[ACP] + adenosine 3',5'-bisphosphate + H(+). Functionally, transfers the 4'-phosphopantetheine moiety from coenzyme A to a Ser of acyl-carrier-protein. The protein is Holo-[acyl-carrier-protein] synthase of Salmonella choleraesuis (strain SC-B67).